Reading from the N-terminus, the 32-residue chain is Periplasmic [NiFe] hydrogenase small subunit (32 aa).

Residues Cys-17 and Cys-20 each coordinate [4Fe-4S] cluster.

Belongs to the [NiFe]/[NiFeSe] hydrogenase small subunit family. Heterodimer of a large and a small subunit. Requires [3Fe-4S] cluster as cofactor. [4Fe-4S] cluster is required as a cofactor.

The protein resides in the periplasm. It carries out the reaction 2 Fe(III)-[cytochrome c3] + H2 = 2 Fe(II)-[cytochrome c3] + 2 H(+). This is Periplasmic [NiFe] hydrogenase small subunit (hydA) from Desulfovibrio multispirans.